An 873-amino-acid chain; its full sequence is Programmed cell death 6-interacting protein (873 aa).

Residue A2 is modified to N-acetylalanine. The region spanning 3-397 is the BRO1 domain; the sequence is SFIWVQLKKT…AQMREATTLA (395 aa). The interaction with CHMP4A, CHMP4B and CHMP4C stretch occupies residues 176 to 508; sequence TVDISPDTVG…KFRAVLDKAV (333 aa). The residue at position 215 (K215) is an N6-acetyllysine. An interaction with SDCBP region spans residues 423-873; sequence LTKSTAVVEQ…PPQQSYYPQQ (451 aa). Residue T484 is modified to Phosphothreonine. Residue S486 is modified to Phosphoserine. A self-association region spans residues 508–873; sequence VQADGQVKER…PPQQSYYPQQ (366 aa). Disordered regions lie at residues 719–808 and 837–873; these read AREP…GPPY and PYPP…YPQQ. The interval 722–725 is interaction with TSG101; the sequence is PSAP. At S735 the chain carries Phosphoserine. Phosphothreonine occurs at positions 742 and 745. Positions 745–767 are enriched in pro residues; sequence TPAPRTMPPAKPQPPARPPPPVL. R749 is subject to Omega-N-methylarginine. Residues 768-791 are compositionally biased toward low complexity; the sequence is PANRVPPAAAATAPAGVGTASAAP. Composition is skewed to pro residues over residues 792 to 808 and 849 to 865; these read PQTP…GPPY and APYP…PQPP. The interval 802-811 is interaction with CEP55; it reads QAQGPPYPTY.

In terms of assembly, self-associates. Interacts with SH3KBP1. Interacts with PDCD6 in a calcium-dependent manner. Interacts with TSG101 in a calcium-dependent manner; PDCD6IP homooligomerization may be required for TSG101-binding. Interacts with SGSM3. Directly interacts with CHMP4A, CHMP4B and CHMP4C. Directly interacts with CEP55 in a 1:2 stoechiometry; this interaction is required for PDCD6IP targeting to the midbody. May interact with PDGFRB. Interacts with SH3GL1 and SH3GL2/endophilin-1. Forms a complex with SDCBP and SDC2. Found in a complex with F-actin, TJP1/ZO-1 and PARD3. Interacts with CD2AP. Interacts with ARRDC1. Interacts (via BRO1 domain) with the ATG12-ATG3 conjugate; this interaction is bridged by ATG12 and promotes multiple PDCD6IP-mediated functions such as endolysosomal trafficking, macroautophagy and exosome biogenesis. May be phosphorylated on tyrosine residues by activated PDGFRB. Expressed in astrocytes and glioma cells.

The protein resides in the cytoplasm. The protein localises to the cytosol. Its subcellular location is the melanosome. It is found in the cytoskeleton. It localises to the microtubule organizing center. The protein resides in the centrosome. The protein localises to the secreted. Its subcellular location is the extracellular exosome. It is found in the cell junction. It localises to the tight junction. The protein resides in the midbody. The protein localises to the midbody ring. Its function is as follows. Multifunctional protein involved in endocytosis, multivesicular body biogenesis, membrane repair, cytokinesis, apoptosis and maintenance of tight junction integrity. Class E VPS protein involved in concentration and sorting of cargo proteins of the multivesicular body (MVB) for incorporation into intralumenal vesicles (ILVs) that are generated by invagination and scission from the limiting membrane of the endosome. Binds to the phospholipid lysobisphosphatidic acid (LBPA) which is abundant in MVBs internal membranes. The MVB pathway requires the sequential function of ESCRT-O, -I,-II and -III complexes. The ESCRT machinery also functions in topologically equivalent membrane fission events, such as the terminal stages of cytokinesis. Adapter for a subset of ESCRT-III proteins, such as CHMP4, to function at distinct membranes. Required for completion of cytokinesis. May play a role in the regulation of both apoptosis and cell proliferation. Regulates exosome biogenesis in concert with SDC1/4 and SDCBP. By interacting with F-actin, PARD3 and TJP1 secures the proper assembly and positioning of actomyosin-tight junction complex at the apical sides of adjacent epithelial cells that defines a spatial membrane domain essential for the maintenance of epithelial cell polarity and barrier. This Rattus norvegicus (Rat) protein is Programmed cell death 6-interacting protein.